A 355-amino-acid chain; its full sequence is Chemerin-like receptor 2 (355 aa).

Topologically, residues 1-41 (MEDLEETLFEEFENYSYALDYYSLESDLEEKVQLGVVHWVS) are extracellular. A glycan (N-linked (GlcNAc...) asparagine) is linked at Asn14. A helical transmembrane segment spans residues 42–62 (LVLYCLSFVLGIPGNAIVIWF). Topologically, residues 63 to 73 (TGFKWKRTVST) are cytoplasmic. The helical transmembrane segment at 74–94 (LWFLNLAIADFIFLLFLPLYI) threads the bilayer. The Extracellular portion of the chain corresponds to 95-112 (SYVVMNFHWPFGIWLCKA). Cys110 and Cys187 are oxidised to a cystine. The helical transmembrane segment at 113–133 (NSFTAQLNMFASVFFLTVISL) threads the bilayer. At 134-154 (DHYIHLIHPVLSHRHRTLKNS) the chain is on the cytoplasmic side. A helical transmembrane segment spans residues 155–175 (LIVIIFIWLLASLIGGPALYF). The Extracellular segment spans residues 176–210 (RDTVEFNNHTLCYNNFQKHDPDLTVIRHHVLTWVK). A helical membrane pass occupies residues 211–231 (YIVGYLFPLLTMSICYLCLIL). Over 232–247 (KVKKRSILISSRHFWT) the chain is Cytoplasmic. The chain crosses the membrane as a helical span at residues 248–268 (ILAVVVAFVVCWTPYHLFSIW). The Extracellular segment spans residues 269–286 (ELTIHHNSYSHHVMQAGI). The chain crosses the membrane as a helical span at residues 287-307 (PLSTGLAFLNSCLNPILYVLI). Residues 308-355 (SKKFQARFRSSVAEILKYTLWEVSCSGTVSEQLRNSETKNLCLLETAQ) are Cytoplasmic-facing.

The protein belongs to the chemokine-like receptor (CMKLR) family.

It localises to the cell membrane. In terms of biological role, receptor for chemoattractant adipokine chemerin/RARRES2 suggesting a role for this receptor in the regulation of inflammation and energy homesotasis. Signals mainly via beta-arrestin pathway. Binding of RARRES2 activates weakly G proteins, calcium mobilization and MAPK1/MAPK3 (ERK1/2) phosphorylation too. Acts also as a receptor for TAFA1, mediates its effects on neuronal stem-cell proliferation and differentiation via the activation of ROCK/ERK and ROCK/STAT3 signaling pathway. This is Chemerin-like receptor 2 (CMKLR2) from Macaca fascicularis (Crab-eating macaque).